A 232-amino-acid chain; its full sequence is Phosphatidylserine decarboxylase proenzyme (232 aa).

S190 serves as the catalytic Schiff-base intermediate with substrate; via pyruvic acid. Position 190 is a pyruvic acid (Ser); by autocatalysis (S190).

This sequence belongs to the phosphatidylserine decarboxylase family. PSD-A subfamily. In terms of assembly, heterodimer of a large membrane-associated beta subunit and a small pyruvoyl-containing alpha subunit. The cofactor is pyruvate. Is synthesized initially as an inactive proenzyme. Formation of the active enzyme involves a self-maturation process in which the active site pyruvoyl group is generated from an internal serine residue via an autocatalytic post-translational modification. Two non-identical subunits are generated from the proenzyme in this reaction, and the pyruvate is formed at the N-terminus of the alpha chain, which is derived from the carboxyl end of the proenzyme. The post-translation cleavage follows an unusual pathway, termed non-hydrolytic serinolysis, in which the side chain hydroxyl group of the serine supplies its oxygen atom to form the C-terminus of the beta chain, while the remainder of the serine residue undergoes an oxidative deamination to produce ammonia and the pyruvoyl prosthetic group on the alpha chain.

It localises to the cell membrane. It catalyses the reaction a 1,2-diacyl-sn-glycero-3-phospho-L-serine + H(+) = a 1,2-diacyl-sn-glycero-3-phosphoethanolamine + CO2. The protein operates within phospholipid metabolism; phosphatidylethanolamine biosynthesis; phosphatidylethanolamine from CDP-diacylglycerol: step 2/2. Functionally, catalyzes the formation of phosphatidylethanolamine (PtdEtn) from phosphatidylserine (PtdSer). In Sinorhizobium medicae (strain WSM419) (Ensifer medicae), this protein is Phosphatidylserine decarboxylase proenzyme.